Reading from the N-terminus, the 554-residue chain is Chaperonin GroEL (554 aa).

Residues 29–32 (TLGP), K50, 86–90 (DGTTT), G414, and D495 contribute to the ATP site.

This sequence belongs to the chaperonin (HSP60) family. Forms a cylinder of 14 subunits composed of two heptameric rings stacked back-to-back. Interacts with the co-chaperonin GroES.

Its subcellular location is the cytoplasm. It catalyses the reaction ATP + H2O + a folded polypeptide = ADP + phosphate + an unfolded polypeptide.. Functionally, together with its co-chaperonin GroES, plays an essential role in assisting protein folding. The GroEL-GroES system forms a nano-cage that allows encapsulation of the non-native substrate proteins and provides a physical environment optimized to promote and accelerate protein folding. In Pelagibacter ubique (strain HTCC1062), this protein is Chaperonin GroEL.